The following is a 452-amino-acid chain: Cysteine--tRNA ligase (452 aa).

Cys-27 contributes to the Zn(2+) binding site. Positions 29 to 39 match the 'HIGH' region motif; sequence PTVQDHFHIGH. Zn(2+)-binding residues include Asp-207, His-232, and Glu-236. A 'KMSKS' region motif is present at residues 265–269; it reads KMSKS. Lys-268 contributes to the ATP binding site.

The protein belongs to the class-I aminoacyl-tRNA synthetase family. Requires Zn(2+) as cofactor.

The protein resides in the cytoplasm. The enzyme catalyses tRNA(Cys) + L-cysteine + ATP = L-cysteinyl-tRNA(Cys) + AMP + diphosphate. In Thermoplasma acidophilum (strain ATCC 25905 / DSM 1728 / JCM 9062 / NBRC 15155 / AMRC-C165), this protein is Cysteine--tRNA ligase.